Here is a 63-residue protein sequence, read N- to C-terminus: Large ribosomal subunit protein bL32 (63 aa).

The segment covering 1-18 (MAHPKAKVSKSRRDKRRA) has biased composition (basic residues). The segment at 1 to 25 (MAHPKAKVSKSRRDKRRAQFNARTK) is disordered.

Belongs to the bacterial ribosomal protein bL32 family.

The polypeptide is Large ribosomal subunit protein bL32 (Chlorobium phaeovibrioides (strain DSM 265 / 1930) (Prosthecochloris vibrioformis (strain DSM 265))).